Consider the following 561-residue polypeptide: Lysine--tRNA ligase (561 aa).

2 residues coordinate Mg(2+): glutamate 409 and glutamate 416.

The protein belongs to the class-II aminoacyl-tRNA synthetase family. In terms of assembly, homodimer. Requires Mg(2+) as cofactor.

The protein resides in the cytoplasm. It catalyses the reaction tRNA(Lys) + L-lysine + ATP = L-lysyl-tRNA(Lys) + AMP + diphosphate. In Nostoc punctiforme (strain ATCC 29133 / PCC 73102), this protein is Lysine--tRNA ligase.